Here is a 467-residue protein sequence, read N- to C-terminus: MTMSTARTAVRSLESLGRVHFIGIGGVGMSAVARIMVARGVPVTGSDAKDLPVMADLAAAGAGIHVGYSAGNLGAAEAVVAGSAIRADNPELQAARAAGLPVLHRSEALAAAMAGDRVVTVAGTHGKSTTTSMVTVLLQGAGLDPTFAIGANVPSLGVNAASGTSDIFVAEADESDGSFLNYRPHIAVVTNVEPDHLDYYGTAEAVYESFDSFTELLPADGVLVACADDPGARALAERTRTRGNTRVVTYGTAEDAQLRLHDGGPGDVWVSTGAGRFALDLQVPGRHNALNAAAAFAVALELGVAPDAASGALAHFSGASRRFEFKGEGRGVRVYDDYAHHPTEVRAALAAARSVAGDHKVHVLFQPHLFSRTREFAADFAEALNAADTALVLDIYPAREDPIPGVSSKLIGDRLSAGGRLVAAEDAVRAVVANAAAGDIVLTAGAGDVTAYGPLIVEALLAEAPGG.

123–129 (GTHGKST) provides a ligand contact to ATP.

It belongs to the MurCDEF family.

The protein localises to the cytoplasm. The enzyme catalyses UDP-N-acetyl-alpha-D-muramate + L-alanine + ATP = UDP-N-acetyl-alpha-D-muramoyl-L-alanine + ADP + phosphate + H(+). It functions in the pathway cell wall biogenesis; peptidoglycan biosynthesis. Cell wall formation. This Arthrobacter sp. (strain FB24) protein is UDP-N-acetylmuramate--L-alanine ligase.